Consider the following 370-residue polypeptide: Coproporphyrin III ferrochelatase (370 aa).

2 residues coordinate Fe-coproporphyrin III: S58 and Y127. Positions 189 and 276 each coordinate Fe(2+).

This sequence belongs to the ferrochelatase family.

It localises to the cytoplasm. The enzyme catalyses Fe-coproporphyrin III + 2 H(+) = coproporphyrin III + Fe(2+). The protein operates within porphyrin-containing compound metabolism; protoheme biosynthesis. Functionally, involved in coproporphyrin-dependent heme b biosynthesis. Catalyzes the insertion of ferrous iron into coproporphyrin III to form Fe-coproporphyrin III. In Corynebacterium glutamicum (strain R), this protein is Coproporphyrin III ferrochelatase.